A 374-amino-acid chain; its full sequence is Ferroptosis suppressor protein 1 (374 aa).

Residue G2 is the site of N-myristoyl glycine attachment. Residues 13–35 traverse the membrane as a helical segment; that stretch reads VVIVGGGFAGIAAASQLKSFGIP. 6-hydroxy-FAD contacts are provided by residues 17–21, R53, and V81; that span reads GGGFA. K167 is subject to N6-acetyllysine. A 6-hydroxy-FAD-binding site is contributed by D285.

The protein belongs to the FAD-dependent oxidoreductase family. 6-hydroxy-FAD is required as a cofactor. N-myristoylation at Gly-2 mediates the recruitment to lipid droplets and plasma membrane. Post-translationally, acetylation at Lys-167 prevents AIFM2 ubiquitination and degradation, thereby inhibiting ferroptosis. KAT2B mediates acetylation at Lys-167, while HDAC3 removes it. In terms of processing, ubiquitinated. AIFM2 undergoes 'Lys-29'-ubiquitination and proteasomal degradation, which is inhibited by acetylation at Lys-167.

The protein localises to the lipid droplet. It is found in the cell membrane. It localises to the cytoplasm. The protein resides in the mitochondrion membrane. Its subcellular location is the nucleus. The enzyme catalyses ubiquinone-10 + NADH + H(+) = ubiquinol-10 + NAD(+). It catalyses the reaction phylloquinone + NADH + H(+) = phylloquinol + NAD(+). The catalysed reaction is menaquinone-4 + NADH + H(+) = menaquinol-4 + NAD(+). It carries out the reaction menadione + NADH + H(+) = menadiol + NAD(+). Its activity is regulated as follows. The modification by 4-hydroxy-2-nonenal (HNE) adduction in mitochondria results in loss of the oxidoreductase activity and activation of a novel function in mitochondrial oxidative stress signaling. An NAD(P)H-dependent oxidoreductase that acts as a key inhibitor of ferroptosis. At the plasma membrane, catalyzes reduction of coenzyme Q/ubiquinone-10 to ubiquinol-10, a lipophilic radical-trapping antioxidant that prevents lipid oxidative damage and consequently ferroptosis. Acts in parallel to GPX4 to suppress phospholipid peroxidation and ferroptosis. This anti-ferroptotic function is independent of cellular glutathione levels. Also acts as a potent radical-trapping antioxidant by mediating warfarin-resistant vitamin K reduction in the canonical vitamin K cycle: catalyzes NAD(P)H-dependent reduction of vitamin K (phylloquinone, menaquinone-4 and menadione) to hydroquinone forms. Hydroquinones act as potent radical-trapping antioxidants inhibitor of phospholipid peroxidation and ferroptosis. May play a role in mitochondrial stress signaling. Upon oxidative stress, associates with the lipid peroxidation end product 4-hydroxy-2-nonenal (HNE) forming a lipid adduct devoid of oxidoreductase activity, which then translocates from mitochondria into the nucleus triggering DNA damage and cell death. The sequence is that of Ferroptosis suppressor protein 1 (aifm2) from Xenopus laevis (African clawed frog).